Reading from the N-terminus, the 118-residue chain is MRVKRGLSGHRRHKKYLTAAKGFRGGRSRLYRTAREAVERSLQYAYVGRKLRKRDFRTLWILRINAGARLSGLSYSRFMHGLKLAGIELNRKVLADLAVYKKDDFAKIVDMAKAALGK.

The protein belongs to the bacterial ribosomal protein bL20 family.

In terms of biological role, binds directly to 23S ribosomal RNA and is necessary for the in vitro assembly process of the 50S ribosomal subunit. It is not involved in the protein synthesizing functions of that subunit. This is Large ribosomal subunit protein bL20 from Desulfovibrio desulfuricans (strain ATCC 27774 / DSM 6949 / MB).